We begin with the raw amino-acid sequence, 70 residues long: Small ribosomal subunit protein bS21B (70 aa).

Belongs to the bacterial ribosomal protein bS21 family.

The sequence is that of Small ribosomal subunit protein bS21B from Rhizobium etli (strain ATCC 51251 / DSM 11541 / JCM 21823 / NBRC 15573 / CFN 42).